Reading from the N-terminus, the 750-residue chain is MIIRSPEPEVKILVDRDPVKTSFEEWARPGHFSRTIAKGPETTTWIWNLHADAHDFDSHTSDLEEISRKVFSAHFGQLSIIFLWLSGMYFHGARFSNYEAWLSDPTHIGPSAQVVWPIVGQEILNGDVGGGFRGIQITSGFFQIWRASGITSELQLYCTAIGALVFAGLMLFAGWFHYHKAAPKLAWFQDVESMLNHHLAGLLGLGSLSWAGHQVHVSLPINQFLDAGVDPKEIPLPHEFILNRDLLAQLYPSFAEGATPFFTLNWSKYAEFLTFRGGLDPVTGGLWLTDIAHHHLAIAILFLIAGHMYRTNWGIGHGLKDILEAHKGPFTGQGHKGLYEILTTSWHAQLSLNLAMLGSLTIVVAHHMYSMPPYPYLAIDYGTQLSLFTHHMWIGGFLIVGAAAHAAIFMVRDYDPTTRYNDLLDRVLRHRDAIISHLNWACIFLGFHSFGLYIHNDTMSALGRPQDMFSDTAIQLQPIFAQWVQNTHALAPGATAPGATTSTSLTWGGGDLIAVGGKVALLPIPLGTADFLVHHIHAFTIHVTVLILLKGVLFARSSRLIPDKANLGFRFPCDGPGRGGTCQVSAWDHVFLGLFWMYNAISVVIFHFSWKMQSDVWGSISDQGVVTHITGGNFAQSSITINGWLRDFLWAQASQVIQSYGSSLSAYGLFFLGAHFVWAFSLMFLFSGRGYWQELIESIVWAHNKLKVAPATQPRALSIVQGRAVGVTHYLLGGIATTWAFFLARIIAVG.

8 helical membrane-spanning segments follow: residues 70–93 (VFSA…FHGA), 156–179 (LYCT…FHYH), 195–219 (LNHH…HVSL), 291–309 (IAHH…GHMY), 346–369 (WHAQ…HHMY), 385–411 (LSLF…IFMV), 433–455 (AIIS…LYIH), and 531–549 (FLVH…LILL). [4Fe-4S] cluster-binding residues include Cys-573 and Cys-582. 2 helical membrane-spanning segments follow: residues 589 to 610 (HVFL…HFSW) and 664 to 686 (LSAY…MFLF). Residue His-675 participates in chlorophyll a' binding. The chlorophyll a site is built by Met-683 and Tyr-691. A phylloquinone-binding site is contributed by Trp-692. Residues 724–744 (AVGVTHYLLGGIATTWAFFLA) form a helical membrane-spanning segment.

Belongs to the PsaA/PsaB family. The PsaA/B heterodimer binds the P700 chlorophyll special pair and subsequent electron acceptors. PSI consists of a core antenna complex that captures photons, and an electron transfer chain that converts photonic excitation into a charge separation. The eukaryotic PSI reaction center is composed of at least 11 subunits. The cofactor is P700 is a chlorophyll a/chlorophyll a' dimer, A0 is one or more chlorophyll a, A1 is one or both phylloquinones and FX is a shared 4Fe-4S iron-sulfur center..

Its subcellular location is the plastid. The protein localises to the chloroplast thylakoid membrane. The enzyme catalyses reduced [plastocyanin] + hnu + oxidized [2Fe-2S]-[ferredoxin] = oxidized [plastocyanin] + reduced [2Fe-2S]-[ferredoxin]. PsaA and PsaB bind P700, the primary electron donor of photosystem I (PSI), as well as the electron acceptors A0, A1 and FX. PSI is a plastocyanin-ferredoxin oxidoreductase, converting photonic excitation into a charge separation, which transfers an electron from the donor P700 chlorophyll pair to the spectroscopically characterized acceptors A0, A1, FX, FA and FB in turn. Oxidized P700 is reduced on the lumenal side of the thylakoid membrane by plastocyanin. The sequence is that of Photosystem I P700 chlorophyll a apoprotein A1 from Drimys granadensis.